The following is a 252-amino-acid chain: Small ribosomal subunit protein uS2 (252 aa).

The protein belongs to the universal ribosomal protein uS2 family.

The protein is Small ribosomal subunit protein uS2 of Alcanivorax borkumensis (strain ATCC 700651 / DSM 11573 / NCIMB 13689 / SK2).